Reading from the N-terminus, the 473-residue chain is Aspartyl/glutamyl-tRNA(Asn/Gln) amidotransferase subunit B (473 aa).

The protein belongs to the GatB/GatE family. GatB subfamily. Heterotrimer of A, B and C subunits.

The enzyme catalyses L-glutamyl-tRNA(Gln) + L-glutamine + ATP + H2O = L-glutaminyl-tRNA(Gln) + L-glutamate + ADP + phosphate + H(+). It carries out the reaction L-aspartyl-tRNA(Asn) + L-glutamine + ATP + H2O = L-asparaginyl-tRNA(Asn) + L-glutamate + ADP + phosphate + 2 H(+). Functionally, allows the formation of correctly charged Asn-tRNA(Asn) or Gln-tRNA(Gln) through the transamidation of misacylated Asp-tRNA(Asn) or Glu-tRNA(Gln) in organisms which lack either or both of asparaginyl-tRNA or glutaminyl-tRNA synthetases. The reaction takes place in the presence of glutamine and ATP through an activated phospho-Asp-tRNA(Asn) or phospho-Glu-tRNA(Gln). This Finegoldia magna (strain ATCC 29328 / DSM 20472 / WAL 2508) (Peptostreptococcus magnus) protein is Aspartyl/glutamyl-tRNA(Asn/Gln) amidotransferase subunit B.